We begin with the raw amino-acid sequence, 318 residues long: Bifunctional protein FolD 3 (318 aa).

NADP(+) is bound by residues 173 to 175 and Ile-242; that span reads GRS.

It belongs to the tetrahydrofolate dehydrogenase/cyclohydrolase family. Homodimer.

The enzyme catalyses (6R)-5,10-methylene-5,6,7,8-tetrahydrofolate + NADP(+) = (6R)-5,10-methenyltetrahydrofolate + NADPH. It carries out the reaction (6R)-5,10-methenyltetrahydrofolate + H2O = (6R)-10-formyltetrahydrofolate + H(+). Its pathway is one-carbon metabolism; tetrahydrofolate interconversion. Functionally, catalyzes the oxidation of 5,10-methylenetetrahydrofolate to 5,10-methenyltetrahydrofolate and then the hydrolysis of 5,10-methenyltetrahydrofolate to 10-formyltetrahydrofolate. In Rubrobacter xylanophilus (strain DSM 9941 / JCM 11954 / NBRC 16129 / PRD-1), this protein is Bifunctional protein FolD 3.